The sequence spans 283 residues: Shikimate dehydrogenase (NADP(+)) (283 aa).

Residues serine 16–serine 18 and threonine 63 each bind shikimate. Lysine 67 serves as the catalytic Proton acceptor. Position 79 (aspartate 79) interacts with NADP(+). Shikimate is bound by residues asparagine 88 and aspartate 103. Residues glycine 128–alanine 132 and glycine 243 each bind NADP(+).

Belongs to the shikimate dehydrogenase family. In terms of assembly, homodimer.

The catalysed reaction is shikimate + NADP(+) = 3-dehydroshikimate + NADPH + H(+). The protein operates within metabolic intermediate biosynthesis; chorismate biosynthesis; chorismate from D-erythrose 4-phosphate and phosphoenolpyruvate: step 4/7. Functionally, involved in the biosynthesis of the chorismate, which leads to the biosynthesis of aromatic amino acids. Catalyzes the reversible NADPH linked reduction of 3-dehydroshikimate (DHSA) to yield shikimate (SA). In Xanthomonas euvesicatoria pv. vesicatoria (strain 85-10) (Xanthomonas campestris pv. vesicatoria), this protein is Shikimate dehydrogenase (NADP(+)).